The chain runs to 193 residues: Holliday junction branch migration complex subunit RuvA (193 aa).

Positions 1–64 are domain I; that stretch reads MIGRIAGTLL…EDAHLLFGFA (64 aa). The tract at residues 65–144 is domain II; that stretch reads TATERNTFRE…DLGHAPGATP (80 aa). Positions 145–151 are flexible linker; that stretch reads LADSAVD. Residues 151-193 form a domain III region; that stretch reads DILNALLALGYSEKEAAQAIKQVPAGTGVSDGIKLALKALSKG.

Belongs to the RuvA family. In terms of assembly, homotetramer. Forms an RuvA(8)-RuvB(12)-Holliday junction (HJ) complex. HJ DNA is sandwiched between 2 RuvA tetramers; dsDNA enters through RuvA and exits via RuvB. An RuvB hexamer assembles on each DNA strand where it exits the tetramer. Each RuvB hexamer is contacted by two RuvA subunits (via domain III) on 2 adjacent RuvB subunits; this complex drives branch migration. In the full resolvosome a probable DNA-RuvA(4)-RuvB(12)-RuvC(2) complex forms which resolves the HJ.

The protein localises to the cytoplasm. The RuvA-RuvB-RuvC complex processes Holliday junction (HJ) DNA during genetic recombination and DNA repair, while the RuvA-RuvB complex plays an important role in the rescue of blocked DNA replication forks via replication fork reversal (RFR). RuvA specifically binds to HJ cruciform DNA, conferring on it an open structure. The RuvB hexamer acts as an ATP-dependent pump, pulling dsDNA into and through the RuvAB complex. HJ branch migration allows RuvC to scan DNA until it finds its consensus sequence, where it cleaves and resolves the cruciform DNA. The protein is Holliday junction branch migration complex subunit RuvA of Cupriavidus metallidurans (strain ATCC 43123 / DSM 2839 / NBRC 102507 / CH34) (Ralstonia metallidurans).